The chain runs to 124 residues: Small polypeptide ROTUNDIFOLIA LIKE 3 (124 aa).

The tract at residues 1 to 23 (MEDERWKLSSSKGRSKSGRSCSS) is disordered. Asn35 and Asn38 each carry an N-linked (GlcNAc...) asparagine glycan. The chain crosses the membrane as a helical span at residues 59-75 (AWSAAGAGGGGASSSSS). The tract at residues 60–95 (WSAAGAGGGGASSSSSSQHQHQQQQQQSNNSQRLSK) is disordered. Low complexity predominate over residues 71 to 91 (SSSSSSQHQHQQQQQQSNNSQ). The N-linked (GlcNAc...) asparagine glycan is linked to Asn88. Positions 92 to 124 (RLSKKCVEAVKEHRARFYIVRRCVSMLVCWRDY) are required for DVL/RTFL small polypeptide activity.

This sequence belongs to the DVL/RTFL small polypeptides family.

It is found in the cell membrane. Its function is as follows. Small polypeptide acting as a regulatory molecule which coordinates cellular responses required for differentiation, growth and development, probably by restricting polar cell proliferation in lateral organs (e.g. leaves and petioles). The protein is Small polypeptide ROTUNDIFOLIA LIKE 3 of Oryza sativa subsp. japonica (Rice).